We begin with the raw amino-acid sequence, 321 residues long: Ribose-phosphate pyrophosphokinase (321 aa).

ATP contacts are provided by residues 44 to 46 (DGE) and 103 to 104 (RQ). His137 and Asp179 together coordinate Mg(2+). Residue Lys202 is part of the active site. D-ribose 5-phosphate is bound by residues Arg204, Asp228, and 232-236 (DTAGT).

Belongs to the ribose-phosphate pyrophosphokinase family. Class I subfamily. In terms of assembly, homohexamer. It depends on Mg(2+) as a cofactor.

It is found in the cytoplasm. The catalysed reaction is D-ribose 5-phosphate + ATP = 5-phospho-alpha-D-ribose 1-diphosphate + AMP + H(+). It functions in the pathway metabolic intermediate biosynthesis; 5-phospho-alpha-D-ribose 1-diphosphate biosynthesis; 5-phospho-alpha-D-ribose 1-diphosphate from D-ribose 5-phosphate (route I): step 1/1. Involved in the biosynthesis of the central metabolite phospho-alpha-D-ribosyl-1-pyrophosphate (PRPP) via the transfer of pyrophosphoryl group from ATP to 1-hydroxyl of ribose-5-phosphate (Rib-5-P). This is Ribose-phosphate pyrophosphokinase from Staphylococcus epidermidis (strain ATCC 35984 / DSM 28319 / BCRC 17069 / CCUG 31568 / BM 3577 / RP62A).